The following is a 103-amino-acid chain: MSYADSSRNAVLTNGGRTLRAECRNADGNWVTSELDLDTCIGNPNGFLGWGMQNFSHSSEDIKLEEGGRKLTCRPKTVDGGFRERQGIDLNRIQNVNGRLVFQ.

This sequence belongs to the cyanovirin-N family.

Mannose-binding lectin. The chain is Cyanovirin-N homolog from Tuber borchii (White truffle).